Here is a 386-residue protein sequence, read N- to C-terminus: Diaminopimelate decarboxylase (386 aa).

The residue at position 46 (Lys-46) is an N6-(pyridoxal phosphate)lysine. Pyridoxal 5'-phosphate is bound by residues Gly-214 and 246–249 (EIGR). Arg-249, Arg-285, and Tyr-289 together coordinate substrate. The active-site Proton donor is Cys-314. Glu-315 and Tyr-343 together coordinate substrate. Residue Tyr-343 participates in pyridoxal 5'-phosphate binding.

Belongs to the Orn/Lys/Arg decarboxylase class-II family. LysA subfamily. Homodimer. Pyridoxal 5'-phosphate is required as a cofactor.

The enzyme catalyses meso-2,6-diaminopimelate + H(+) = L-lysine + CO2. Its pathway is amino-acid biosynthesis; L-lysine biosynthesis via DAP pathway; L-lysine from DL-2,6-diaminopimelate: step 1/1. Its function is as follows. Specifically catalyzes the decarboxylation of meso-diaminopimelate (meso-DAP) to L-lysine. The protein is Diaminopimelate decarboxylase of Thermotoga maritima (strain ATCC 43589 / DSM 3109 / JCM 10099 / NBRC 100826 / MSB8).